We begin with the raw amino-acid sequence, 81 residues long: UPF0349 protein SE_0633 (81 aa).

It belongs to the UPF0349 family.

The sequence is that of UPF0349 protein SE_0633 from Staphylococcus epidermidis (strain ATCC 12228 / FDA PCI 1200).